The primary structure comprises 260 residues: Putative hydro-lyase Dshi_0610 (260 aa).

The protein belongs to the D-glutamate cyclase family.

This is Putative hydro-lyase Dshi_0610 from Dinoroseobacter shibae (strain DSM 16493 / NCIMB 14021 / DFL 12).